The primary structure comprises 434 residues: Serine hydroxymethyltransferase (434 aa).

Residues Leu-132 and Gly-136–Leu-138 each bind (6S)-5,6,7,8-tetrahydrofolate. Lys-241 bears the N6-(pyridoxal phosphate)lysine mark.

It belongs to the SHMT family. In terms of assembly, homodimer. The cofactor is pyridoxal 5'-phosphate.

Its subcellular location is the cytoplasm. It carries out the reaction (6R)-5,10-methylene-5,6,7,8-tetrahydrofolate + glycine + H2O = (6S)-5,6,7,8-tetrahydrofolate + L-serine. The protein operates within one-carbon metabolism; tetrahydrofolate interconversion. It functions in the pathway amino-acid biosynthesis; glycine biosynthesis; glycine from L-serine: step 1/1. Catalyzes the reversible interconversion of serine and glycine with tetrahydrofolate (THF) serving as the one-carbon carrier. This reaction serves as the major source of one-carbon groups required for the biosynthesis of purines, thymidylate, methionine, and other important biomolecules. Also exhibits THF-independent aldolase activity toward beta-hydroxyamino acids, producing glycine and aldehydes, via a retro-aldol mechanism. This is Serine hydroxymethyltransferase from Nitrobacter hamburgensis (strain DSM 10229 / NCIMB 13809 / X14).